Consider the following 395-residue polypeptide: D-alanine--D-alanine ligase (395 aa).

An ATP-grasp domain is found at 172–391 (KVVLDAAGIP…YTELITRLIE (220 aa)). 204–266 (DAGLTYPLFV…EQGIDGREIE (63 aa)) lines the ATP pocket. Mg(2+) is bound by residues aspartate 345, glutamate 358, and asparagine 360.

This sequence belongs to the D-alanine--D-alanine ligase family. The cofactor is Mg(2+). Mn(2+) serves as cofactor.

The protein localises to the cytoplasm. It catalyses the reaction 2 D-alanine + ATP = D-alanyl-D-alanine + ADP + phosphate + H(+). The protein operates within cell wall biogenesis; peptidoglycan biosynthesis. Functionally, cell wall formation. The sequence is that of D-alanine--D-alanine ligase from Bifidobacterium longum (strain DJO10A).